Here is a 461-residue protein sequence, read N- to C-terminus: GTPase Der (461 aa).

EngA-type G domains lie at 2–166 (IKVA…PKKP) and 199–370 (IKVA…KNYS). GTP contacts are provided by residues 8-15 (GKPNVGKS), 57-61 (DTGGL), 118-121 (NKID), 205-212 (GRVNVGKS), 252-256 (DTAGI), and 316-319 (NKWD). The region spanning 371 to 455 (KRIPTATLNK…PIIFVARKKG (85 aa)) is the KH-like domain.

Belongs to the TRAFAC class TrmE-Era-EngA-EngB-Septin-like GTPase superfamily. EngA (Der) GTPase family. As to quaternary structure, associates with the 50S ribosomal subunit.

In terms of biological role, GTPase that plays an essential role in the late steps of ribosome biogenesis. In Nautilia profundicola (strain ATCC BAA-1463 / DSM 18972 / AmH), this protein is GTPase Der.